The primary structure comprises 356 residues: Uroporphyrinogen decarboxylase (356 aa).

Residues 27 to 31 (RQAGR), Asp-77, Tyr-154, Thr-209, and His-327 contribute to the substrate site.

Belongs to the uroporphyrinogen decarboxylase family. In terms of assembly, homodimer.

Its subcellular location is the cytoplasm. It catalyses the reaction uroporphyrinogen III + 4 H(+) = coproporphyrinogen III + 4 CO2. It participates in porphyrin-containing compound metabolism; protoporphyrin-IX biosynthesis; coproporphyrinogen-III from 5-aminolevulinate: step 4/4. Functionally, catalyzes the decarboxylation of four acetate groups of uroporphyrinogen-III to yield coproporphyrinogen-III. The sequence is that of Uroporphyrinogen decarboxylase from Hahella chejuensis (strain KCTC 2396).